A 191-amino-acid polypeptide reads, in one-letter code: ATP-dependent Clp protease proteolytic subunit 1 (191 aa).

Serine 91 functions as the Nucleophile in the catalytic mechanism. Histidine 116 is a catalytic residue.

It belongs to the peptidase S14 family. In terms of assembly, fourteen ClpP subunits assemble into 2 heptameric rings which stack back to back to give a disk-like structure with a central cavity, resembling the structure of eukaryotic proteasomes.

The protein resides in the cytoplasm. It carries out the reaction Hydrolysis of proteins to small peptides in the presence of ATP and magnesium. alpha-casein is the usual test substrate. In the absence of ATP, only oligopeptides shorter than five residues are hydrolyzed (such as succinyl-Leu-Tyr-|-NHMec, and Leu-Tyr-Leu-|-Tyr-Trp, in which cleavage of the -Tyr-|-Leu- and -Tyr-|-Trp bonds also occurs).. Functionally, cleaves peptides in various proteins in a process that requires ATP hydrolysis. Has a chymotrypsin-like activity. Plays a major role in the degradation of misfolded proteins. This Chlamydia caviae (strain ATCC VR-813 / DSM 19441 / 03DC25 / GPIC) (Chlamydophila caviae) protein is ATP-dependent Clp protease proteolytic subunit 1.